Here is an 88-residue protein sequence, read N- to C-terminus: UPF0297 protein SGO_2042 (88 aa).

The protein belongs to the UPF0297 family.

The chain is UPF0297 protein SGO_2042 from Streptococcus gordonii (strain Challis / ATCC 35105 / BCRC 15272 / CH1 / DL1 / V288).